A 163-amino-acid polypeptide reads, in one-letter code: Odorant-binding protein 1a (163 aa).

Residues 1 to 16 form the signal peptide; sequence MAKFLLLALTFGLAHA. Intrachain disulfides connect Cys-50–Cys-54 and Cys-69–Cys-161.

Belongs to the calycin superfamily. Lipocalin family. In terms of assembly, may form a heterodimer with OBP1B. In terms of processing, the N-terminus may be blocked. Expressed in nasal mucosa (at protein level). Specifically detected in septal and lateral nasal glands.

The protein localises to the secreted. In terms of biological role, binds the chemical odorant 2-isobutyl-3-methoxypyrazine. The sequence is that of Odorant-binding protein 1a from Mus musculus (Mouse).